The sequence spans 470 residues: Cysteine--tRNA ligase 1 (470 aa).

C29 provides a ligand contact to Zn(2+). The 'HIGH' region signature appears at 31-41 (PTVYDDAHIGN). The Zn(2+) site is built by C221, H246, and E250. The 'KMSKS' region motif lies at 279 to 283 (KMSKS). ATP is bound at residue K282.

The protein belongs to the class-I aminoacyl-tRNA synthetase family. In terms of assembly, monomer. It depends on Zn(2+) as a cofactor.

Its subcellular location is the cytoplasm. The catalysed reaction is tRNA(Cys) + L-cysteine + ATP = L-cysteinyl-tRNA(Cys) + AMP + diphosphate. The sequence is that of Cysteine--tRNA ligase 1 from Burkholderia lata (strain ATCC 17760 / DSM 23089 / LMG 22485 / NCIMB 9086 / R18194 / 383).